The sequence spans 638 residues: Threonine--tRNA ligase (638 aa).

The region spanning methionine 1–threonine 61 is the TGS domain. Positions aspartate 243 to proline 534 are catalytic. Positions 334, 385, and 511 each coordinate Zn(2+).

This sequence belongs to the class-II aminoacyl-tRNA synthetase family. Homodimer. Zn(2+) serves as cofactor.

It is found in the cytoplasm. It carries out the reaction tRNA(Thr) + L-threonine + ATP = L-threonyl-tRNA(Thr) + AMP + diphosphate + H(+). Catalyzes the attachment of threonine to tRNA(Thr) in a two-step reaction: L-threonine is first activated by ATP to form Thr-AMP and then transferred to the acceptor end of tRNA(Thr). Also edits incorrectly charged L-seryl-tRNA(Thr). This is Threonine--tRNA ligase from Alteromonas mediterranea (strain DSM 17117 / CIP 110805 / LMG 28347 / Deep ecotype).